The chain runs to 139 residues: Non-structural protein 1 (139 aa).

The short motif at 136–139 (DLNS) is the DLNP; interaction with MAP1B element.

Belongs to the pneumovirus non-structural protein 1 family. In terms of assembly, monomer. Homomultimer. Heteromultimer with NS2. Interacts with the matrix protein M. Interacts with host ELOC and CUL2; this interaction allows NS1 to form an active E3 ligase with ELOC and CUL2. Interacts with host IRF3; this interaction leads to the disrupted association of IRF3 with CREBBP and thus reduced binding of IRF3 to the IFN-beta promoter. Interacts with host MAVS; this interaction prevents MAVS binding to RIGI and inhibits signaling pathway leading to interferon production. Interacts with host MAP1B/microtubule-associated protein 1B. Interacts with host TRIM25 (via SPRY domain); this interaction suppresses RIGI ubiquitination and results in decreased interaction between RIGI and MAVS.

The protein localises to the host cytoplasm. Its subcellular location is the host mitochondrion. It is found in the host nucleus. In terms of biological role, plays a major role in antagonizing the type I IFN-mediated antiviral response by degrading or inhibiting multiple cellular factors required for either IFN induction or response pathways. Acts cooperatively with NS2 to repress activation and nuclear translocation of host IFN-regulatory factor IRF3. Also disrupts the association of IRF3 with CREBBP. Interacts with host mitochondrial-associated membrane (MAM) MAVS and prevents the interaction with RIGI. Interacts with TRIM25 to suppress TRIM25-mediated RIGI ubiquitination and thereby RIGI-MAVS interaction. Together with NS2, participates in the proteasomal degradation of host STAT2, IRF3, IRF7, TBK1 and RIGI through a NS-degradasome involving CUL2 and Elongin-C. The degradasome requires an intact mitochondrial MAVS. Decreases the levels of host TRAF3 and IKBKE/IKK-epsilon. As functions other than disruptions of the type I IFN-mediated antiviral signaling pathways, induces host SOCS1 and SOCS3 expression. Suppresses premature apoptosis by an NF-kappa-B-dependent, interferon-independent mechanism and thus facilitates virus growth. Additionally, NS1 may serve some inhibitory role in viral transcription and RNA replication. Suppresses proliferation and activation of host CD103+ CD8+ cytotoxic T-lymphocytes and Th17 helper T-lymphocytes. The sequence is that of Non-structural protein 1 (1C) from Human respiratory syncytial virus B (strain 18537).